We begin with the raw amino-acid sequence, 329 residues long: D-alanine--D-alanine ligase (329 aa).

The region spanning 120-326 (KLWYDAIGIP…FHEFLADCIN (207 aa)) is the ATP-grasp domain. Residue 150 to 205 (AFDKWGKVFVKAARQGSSVGCYSVTNKQSVSQAVNDAFGYSEQVLVEKSVKPRELE) coordinates ATP. Positions 280, 293, and 295 each coordinate Mg(2+).

This sequence belongs to the D-alanine--D-alanine ligase family. Mg(2+) serves as cofactor. Requires Mn(2+) as cofactor.

It localises to the cytoplasm. The catalysed reaction is 2 D-alanine + ATP = D-alanyl-D-alanine + ADP + phosphate + H(+). The protein operates within cell wall biogenesis; peptidoglycan biosynthesis. Cell wall formation. This is D-alanine--D-alanine ligase from Vibrio campbellii (strain ATCC BAA-1116).